The following is a 345-amino-acid chain: Phosphate acyltransferase (345 aa).

The protein belongs to the PlsX family. As to quaternary structure, homodimer. Probably interacts with PlsY.

The protein localises to the cytoplasm. The enzyme catalyses a fatty acyl-[ACP] + phosphate = an acyl phosphate + holo-[ACP]. It functions in the pathway lipid metabolism; phospholipid metabolism. Its function is as follows. Catalyzes the reversible formation of acyl-phosphate (acyl-PO(4)) from acyl-[acyl-carrier-protein] (acyl-ACP). This enzyme utilizes acyl-ACP as fatty acyl donor, but not acyl-CoA. This Thermodesulfovibrio yellowstonii (strain ATCC 51303 / DSM 11347 / YP87) protein is Phosphate acyltransferase.